A 273-amino-acid polypeptide reads, in one-letter code: Dermonecrotic toxin LapSicTox-alphaIB1aiii (273 aa).

H5 is a catalytic residue. The Mg(2+) site is built by E25 and D27. The active-site Nucleophile is the H41. Disulfide bonds link C45–C51 and C47–C190. A Mg(2+)-binding site is contributed by D85. N250 carries N-linked (GlcNAc...) asparagine glycosylation.

It belongs to the arthropod phospholipase D family. Class II subfamily. It depends on Mg(2+) as a cofactor. As to expression, expressed by the venom gland.

Its subcellular location is the secreted. The enzyme catalyses an N-(acyl)-sphingosylphosphocholine = an N-(acyl)-sphingosyl-1,3-cyclic phosphate + choline. It carries out the reaction an N-(acyl)-sphingosylphosphoethanolamine = an N-(acyl)-sphingosyl-1,3-cyclic phosphate + ethanolamine. The catalysed reaction is a 1-acyl-sn-glycero-3-phosphocholine = a 1-acyl-sn-glycero-2,3-cyclic phosphate + choline. It catalyses the reaction a 1-acyl-sn-glycero-3-phosphoethanolamine = a 1-acyl-sn-glycero-2,3-cyclic phosphate + ethanolamine. In terms of biological role, dermonecrotic toxins cleave the phosphodiester linkage between the phosphate and headgroup of certain phospholipids (sphingolipid and lysolipid substrates), forming an alcohol (often choline) and a cyclic phosphate. This toxin acts on sphingomyelin (SM). It may also act on ceramide phosphoethanolamine (CPE), lysophosphatidylcholine (LPC) and lysophosphatidylethanolamine (LPE), but not on lysophosphatidylserine (LPS), and lysophosphatidylglycerol (LPG). It acts by transphosphatidylation, releasing exclusively cyclic phosphate products as second products. Induces dermonecrosis, hemolysis, increased vascular permeability, edema, inflammatory response, and platelet aggregation. This Loxosceles apachea (Apache recluse spider) protein is Dermonecrotic toxin LapSicTox-alphaIB1aiii.